Consider the following 746-residue polypeptide: Protein psiN (746 aa).

Positions methionine 1 to serine 23 are cleaved as a signal peptide. Topologically, residues aspartate 24–alanine 679 are extracellular. Residues asparagine 97 and asparagine 124 are each glycosylated (N-linked (GlcNAc...) asparagine). One can recognise a PA14 domain in the interval valine 125–methionine 276. Asparagine 319, asparagine 353, asparagine 380, asparagine 477, asparagine 553, asparagine 628, and asparagine 654 each carry an N-linked (GlcNAc...) asparagine glycan. A helical membrane pass occupies residues valine 680 to leucine 700. Residues alanine 701–serine 746 are Cytoplasmic-facing. The disordered stretch occupies residues serine 714 to serine 746. Positions aspartate 717–serine 746 are enriched in polar residues.

Belongs to the prespore-cell-inducing factor family.

The protein localises to the membrane. The sequence is that of Protein psiN (psiN) from Dictyostelium discoideum (Social amoeba).